The chain runs to 389 residues: cAMP-dependent protein kinase regulatory subunit (389 aa).

Disordered stretches follow at residues Met1 to Gly57 and Ser87 to His110. The dimerization and phosphorylation stretch occupies residues Met1–Phe128. The span at Ala21 to His31 shows a compositional bias: polar residues. Positions Arg34 to Val43 are enriched in basic and acidic residues. Ser87 bears the Phosphoserine mark. Polar residues predominate over residues Ser87–Trp105. Residues Leu129 to Glu258, Glu207, Arg216, Leu261 to Glu377, Glu327, and Arg336 contribute to the 3',5'-cyclic AMP site.

The protein belongs to the cAMP-dependent kinase regulatory chain family. Tetramer, composed of 2 regulatory (R) and 2 catalytic (C) subunits. In the presence of cAMP it dissociates into 2 active monomeric C subunits and an R dimer.

The chain is cAMP-dependent protein kinase regulatory subunit (pkar) from Blumeria graminis (Powdery mildew).